A 602-amino-acid polypeptide reads, in one-letter code: DNA damage-binding protein CMR1 (602 aa).

The disordered stretch occupies residues 35–85 (KEVDNKSFSSPSSQKRRKTTKKPVIKKEISEPSRRSRRIAGIKSELEDPKQ). A compositionally biased stretch (basic residues) spans 48–58 (QKRRKTTKKPV). The segment covering 59–68 (IKKEISEPSR) has biased composition (basic and acidic residues). 6 WD repeats span residues 229–270 (ICHN…NDTK), 291–328 (RNVS…STEL), 390–430 (LHDK…KSVY), 446–484 (NSRL…KLDN), 526–569 (GRWV…LAHL), and 571–602 (EQVG…YLFE).

Belongs to the WD repeat DDB2/WDR76 family.

Functionally, DNA-binding protein that binds to both single- and double-stranded DNA. Binds preferentially to UV-damaged DNA. May be involved in DNA-metabolic processes. This is DNA damage-binding protein CMR1 from Candida albicans (strain SC5314 / ATCC MYA-2876) (Yeast).